The chain runs to 241 residues: Ribonuclease PH (241 aa).

Phosphate contacts are provided by residues Arg-89 and 127 to 129 (GTR).

This sequence belongs to the RNase PH family. In terms of assembly, homohexameric ring arranged as a trimer of dimers.

It catalyses the reaction tRNA(n+1) + phosphate = tRNA(n) + a ribonucleoside 5'-diphosphate. Its function is as follows. Phosphorolytic 3'-5' exoribonuclease that plays an important role in tRNA 3'-end maturation. Removes nucleotide residues following the 3'-CCA terminus of tRNAs; can also add nucleotides to the ends of RNA molecules by using nucleoside diphosphates as substrates, but this may not be physiologically important. Probably plays a role in initiation of 16S rRNA degradation (leading to ribosome degradation) during starvation. This chain is Ribonuclease PH, found in Xanthomonas axonopodis pv. citri (strain 306).